Consider the following 373-residue polypeptide: NADH-quinone oxidoreductase subunit D (373 aa).

The protein belongs to the complex I 49 kDa subunit family. NDH-1 is composed of 14 different subunits. Subunits NuoB, C, D, E, F, and G constitute the peripheral sector of the complex.

The protein resides in the cell inner membrane. The catalysed reaction is a quinone + NADH + 5 H(+)(in) = a quinol + NAD(+) + 4 H(+)(out). Its function is as follows. NDH-1 shuttles electrons from NADH, via FMN and iron-sulfur (Fe-S) centers, to quinones in the respiratory chain. The immediate electron acceptor for the enzyme in this species is believed to be ubiquinone. Couples the redox reaction to proton translocation (for every two electrons transferred, four hydrogen ions are translocated across the cytoplasmic membrane), and thus conserves the redox energy in a proton gradient. This chain is NADH-quinone oxidoreductase subunit D, found in Syntrophobacter fumaroxidans (strain DSM 10017 / MPOB).